Consider the following 186-residue polypeptide: ATP synthase subunit delta (186 aa).

The protein belongs to the ATPase delta chain family. As to quaternary structure, F-type ATPases have 2 components, F(1) - the catalytic core - and F(0) - the membrane proton channel. F(1) has five subunits: alpha(3), beta(3), gamma(1), delta(1), epsilon(1). F(0) has three main subunits: a(1), b(2) and c(10-14). The alpha and beta chains form an alternating ring which encloses part of the gamma chain. F(1) is attached to F(0) by a central stalk formed by the gamma and epsilon chains, while a peripheral stalk is formed by the delta and b chains.

The protein resides in the cell inner membrane. F(1)F(0) ATP synthase produces ATP from ADP in the presence of a proton or sodium gradient. F-type ATPases consist of two structural domains, F(1) containing the extramembraneous catalytic core and F(0) containing the membrane proton channel, linked together by a central stalk and a peripheral stalk. During catalysis, ATP synthesis in the catalytic domain of F(1) is coupled via a rotary mechanism of the central stalk subunits to proton translocation. In terms of biological role, this protein is part of the stalk that links CF(0) to CF(1). It either transmits conformational changes from CF(0) to CF(1) or is implicated in proton conduction. The chain is ATP synthase subunit delta from Brucella anthropi (strain ATCC 49188 / DSM 6882 / CCUG 24695 / JCM 21032 / LMG 3331 / NBRC 15819 / NCTC 12168 / Alc 37) (Ochrobactrum anthropi).